A 121-amino-acid polypeptide reads, in one-letter code: Chorion class A proteins Ld9 (121 aa).

It belongs to the chorion protein family.

Functionally, this protein is one of many from the eggshell of the gypsy moth. This Lymantria dispar (Gypsy moth) protein is Chorion class A proteins Ld9.